Consider the following 199-residue polypeptide: NAD(P)H dehydrogenase (quinone) (199 aa).

Positions 4–190 (ILVLYYSMYG…TIARYQGEHV (187 aa)) constitute a Flavodoxin-like domain. FMN-binding positions include 10–15 (SMYGHI) and 79–81 (TRF). Residue Tyr-12 participates in NAD(+) binding. Trp-99 contacts substrate. FMN-binding positions include 114–119 (STGTGG) and His-134.

It belongs to the WrbA family. Requires FMN as cofactor.

It catalyses the reaction a quinone + NADH + H(+) = a quinol + NAD(+). It carries out the reaction a quinone + NADPH + H(+) = a quinol + NADP(+). The chain is NAD(P)H dehydrogenase (quinone) from Serratia proteamaculans (strain 568).